Consider the following 704-residue polypeptide: E3 ubiquitin-protein ligase MBR1 (704 aa).

Disordered stretches follow at residues 1–20, 37–61, 176–197, 245–354, 381–403, and 436–525; these read MNPMQGPRSIGGSSTEVNQV, NPADTGFPNNSTPSGRPTYASSSSH, SSLGSSVQAAGESSSGPASPFG, LSLA…GENQ, SNPSGIGMPAERLGPQWETPRSN, and SLFV…RHRR. A compositionally biased stretch (polar residues) spans 43-61; sequence FPNNSTPSGRPTYASSSSH. Composition is skewed to low complexity over residues 184-196 and 245-255; these read AAGESSSGPASPF and LSLATPSQSSP. Composition is skewed to polar residues over residues 281–290, 300–329, and 340–354; these read FHSTRNTDTL, RQPQESVAFSVSHGGTSVRPTGSLQQNLPL, and RSSSITSGSNTGENQ. A compositionally biased stretch (pro residues) spans 452–467; sequence QPNPTWIPPQNAPPHN. A compositionally biased stretch (low complexity) spans 485–505; sequence SPSASHGGPLPLLPAGPSVSS. The RING-type; atypical zinc finger occupies 656–697; sequence CCICQEEYVEGDNLGTLKCGHEFHKDCIKQWVMIKNLCPICK.

Belongs to the RING-type zinc finger family. Interacts with MED25 and UBC11.

The catalysed reaction is S-ubiquitinyl-[E2 ubiquitin-conjugating enzyme]-L-cysteine + [acceptor protein]-L-lysine = [E2 ubiquitin-conjugating enzyme]-L-cysteine + N(6)-ubiquitinyl-[acceptor protein]-L-lysine.. It participates in protein modification; protein ubiquitination. Functionally, E3 ubiquitin-protein ligase that functions as a regulator of MED25 stability by targeting MED25 for degradation in a RING-H2-dependent way. Proteasome-dependent degradation of MED25 seems to activate its function as positive regulator of FLOWERING LOCUS T (FT) and is important to induce the expression of FT and consequently to promote flowering. The polypeptide is E3 ubiquitin-protein ligase MBR1 (MBR1) (Arabidopsis thaliana (Mouse-ear cress)).